The following is a 363-amino-acid chain: Dioxygenase sphC (363 aa).

Positions 183, 185, and 259 each coordinate Fe cation.

This sequence belongs to the PhyH family. In terms of assembly, homodimer. Fe cation is required as a cofactor.

It catalyses the reaction sphingofungin B1 + 2-oxoglutarate + O2 = sphingofungin B + succinate + CO2. It participates in secondary metabolite biosynthesis. Functionally, dioxygenase; part of the gene cluster that mediates the biosynthesis of sphingofungins, bioactive molecules acting as sphingolipid inhibitors via inhibiting serine palmitoyl transferase (SPT). Within the pathway, sphC catalyzes the hydrolxylation at C-4 to convert sphingofungin B1 into sphingofungin B as well as presphingofungin into sphingofungin B2. Sphingofungin biosynthesis starts with the PKS sphB that produces an C18 polyketide precursor 3-hydroxyoctadeca-4,10-dienoyl-ACP containing one delta-6 desaturation and one delta-12 desaturation. The aminoacyl transferase sphA uses the sphB product to produce 3-keto-presphingofungin by adding an aminomalonate molecule. SphF then reduces the C-3 ketone of 3-keto-presphingofungin which leads to presphingofungin. The cytochrome P450 monooxygenase sphH converts presphingofungin into sphingofungin B1 which is further converted to sphingofungin B by the dioxygenase sphC. SphC is also able to convert presphingofungin into sphingofungin B2. The acetyltransferase sphE acetylates sphingofungin B to produce sphingofungin C, but can also convert sphingofungin B1 into sphingofungin C1 and sphingofungin B2 into sphingofungin C2. Finally, sphingofungin C can be spontaneously converted into sphingofungin D. This Aspergillus fumigatus (strain CBS 144.89 / FGSC A1163 / CEA10) (Neosartorya fumigata) protein is Dioxygenase sphC.